Reading from the N-terminus, the 183-residue chain is Capsid protein (183 aa).

Residues 136-183 are disordered; the sequence is NAPILSTLPETTVVRRRGRSPRRRTPSPRRRRSQSPRRRRSQSPASQC. Residues 149 to 176 show a composition bias toward basic residues; that stretch reads VRRRGRSPRRRTPSPRRRRSQSPRRRRS. A phosphoserine; by host mark is found at Ser-155, Ser-162, and Ser-170. Residues 155–161 form a 1; half-length repeat; sequence SPRRRTP. The 3 X 8 AA repeats of S-P-R-R-R-[PR]-S-Q stretch occupies residues 155–177; it reads SPRRRTPSPRRRRSQSPRRRRSQ. The Bipartite nuclear localization signal signature appears at 158–175; it reads RRTPSPRRRRSQSPRRRR. A run of 2 repeats spans residues 162-169 and 170-177. The RNA binding stretch occupies residues 177–183; sequence QSPASQC.

This sequence belongs to the orthohepadnavirus core antigen family. Homodimerizes, then multimerizes. Interacts with cytosol exposed regions of viral L glycoprotein present in the reticulum-to-Golgi compartment. Interacts with human FLNB. Phosphorylated form interacts with host importin alpha; this interaction depends on the exposure of the NLS, which itself depends upon genome maturation and/or phosphorylation of the capsid protein. Interacts with host NUP153. Post-translationally, phosphorylated by host SRPK1, SRPK2, and maybe protein kinase C or GAPDH. Phosphorylation is critical for pregenomic RNA packaging. Protein kinase C phosphorylation is stimulated by HBx protein and may play a role in transport of the viral genome to the nucleus at the late step during the viral replication cycle.

The protein localises to the virion. The protein resides in the host cytoplasm. Functionally, self assembles to form an icosahedral capsid. Most capsids appear to be large particles with an icosahedral symmetry of T=4 and consist of 240 copies of capsid protein, though a fraction forms smaller T=3 particles consisting of 180 capsid proteins. Entering capsids are transported along microtubules to the nucleus. Phosphorylation of the capsid is thought to induce exposure of nuclear localization signal in the C-terminal portion of the capsid protein that allows binding to the nuclear pore complex via the importin (karyopherin-) alpha and beta. Capsids are imported in intact form through the nuclear pore into the nuclear basket, where it probably binds NUP153. Only capsids that contain the mature viral genome can release the viral DNA and capsid protein into the nucleoplasm. Immature capsids get stuck in the basket. Capsids encapsulate the pre-genomic RNA and the P protein. Pre-genomic RNA is reverse-transcribed into DNA while the capsid is still in the cytoplasm. The capsid can then either be directed to the nucleus, providing more genomes for transcription, or bud through the endoplasmic reticulum to provide new virions. The sequence is that of Capsid protein from Hylobatidae (gibbons).